Consider the following 258-residue polypeptide: Phosphoprotein ECPP44 (258 aa).

Disordered regions lie at residues 1 to 25, 46 to 131, and 148 to 175; these read MASD…DRGL, EKVQ…PVEV, and KLPG…VDCA. 4 stretches are compositionally biased toward basic and acidic residues: residues 11–25, 46–80, 109–124, and 148–158; these read SVEK…DRGL, EKVQ…EKLH, GLKE…KEED, and KLPGGGKKVEE.

The protein belongs to the plant dehydrin family. Phosphorylated in embryogenic and somatic embryos. Not phosphorylated in non-embryogenic cells.

In terms of biological role, phosphorylation of ECCP44 protein is thought to be involved in the acquisition of embryogenic competence. Unlike other dehydrins, it is not thought to function as an environmental stress tolerant. The polypeptide is Phosphoprotein ECPP44 (ECPP44) (Daucus carota (Wild carrot)).